An 84-amino-acid chain; its full sequence is Neurotoxin BmK-M11 (84 aa).

Residues 1–19 (MNYLVMISFALLLMTGVES) form the signal peptide. An LCN-type CS-alpha/beta domain is found at 21–83 (RDAYIAKPEN…VPIRVPGKCH (63 aa)). 4 disulfides stabilise this stretch: C31–C82, C35–C55, C41–C65, and C45–C67. Position 84 (R84) is a propeptide, removed by a carboxypeptidase.

Belongs to the long (4 C-C) scorpion toxin superfamily. Sodium channel inhibitor family. Alpha subfamily. As to expression, expressed by the venom gland.

It is found in the secreted. Its function is as follows. Alpha toxins bind voltage-independently at site-3 of sodium channels (Nav) and inhibit the inactivation of the activated channels, thereby blocking neuronal transmission. This recombinant toxin selectively inhibits the fast inactivation of mNav1.4/SCN4A (EC(50)=82.3 nM) (tested in HEK293 cells). This chain is Neurotoxin BmK-M11, found in Olivierus martensii (Manchurian scorpion).